The primary structure comprises 209 residues: Ion-translocating oxidoreductase complex subunit G (209 aa).

A helical transmembrane segment spans residues G9–L29. FMN phosphoryl threonine is present on T175.

The protein belongs to the RnfG family. The complex is composed of six subunits: RnfA, RnfB, RnfC, RnfD, RnfE and RnfG. The cofactor is FMN.

It localises to the cell inner membrane. Functionally, part of a membrane-bound complex that couples electron transfer with translocation of ions across the membrane. This is Ion-translocating oxidoreductase complex subunit G from Yersinia pestis.